We begin with the raw amino-acid sequence, 296 residues long: uncharacterized protein (296 aa).

It is found in the mitochondrion. This is an uncharacterized protein from Podospora anserina (strain S / ATCC MYA-4624 / DSM 980 / FGSC 10383) (Pleurage anserina).